A 513-amino-acid polypeptide reads, in one-letter code: Putative ribose/galactose/methyl galactoside import ATP-binding protein 2 (513 aa).

ABC transporter domains follow at residues 24-260 and 270-510; these read LAAD…VGRE and VPIG…VMDL. 56-63 lines the ATP pocket; sequence GENGAGKS.

The protein belongs to the ABC transporter superfamily. Carbohydrate importer 2 (CUT2) (TC 3.A.1.2) family.

The protein resides in the cell inner membrane. The enzyme catalyses D-ribose(out) + ATP + H2O = D-ribose(in) + ADP + phosphate + H(+). It catalyses the reaction D-galactose(out) + ATP + H2O = D-galactose(in) + ADP + phosphate + H(+). Its function is as follows. Part of an ABC transporter complex involved in carbohydrate import. Could be involved in ribose, galactose and/or methyl galactoside import. Responsible for energy coupling to the transport system. The protein is Putative ribose/galactose/methyl galactoside import ATP-binding protein 2 of Agrobacterium fabrum (strain C58 / ATCC 33970) (Agrobacterium tumefaciens (strain C58)).